The primary structure comprises 183 residues: Microfibrillar-associated protein 2 (183 aa).

The N-terminal stretch at 1 to 17 is a signal peptide; that stretch reads MRAASLFLLFLPAGLLA. Glutamine 18 bears the Pyrrolidone carboxylic acid mark. Glutamine 20 participates in a covalent cross-link: Isoglutamyl lysine isopeptide (Gln-Lys) (interchain with K-?). Sulfotyrosine occurs at positions 47, 48, and 50. One can recognise a ShKT domain in the interval 153–183; sequence CRDKFSKCGVLASSGLCQSVAAACARSCGGC. Intrachain disulfides connect cysteine 153–cysteine 183, cysteine 160–cysteine 176, and cysteine 169–cysteine 180.

Belongs to the MFAP family. Forms a ternary complex with BGN and ELN. Interacts with FBN1 (via N-terminal domain) and FBN2. In terms of processing, O-glycosylated; glycans consist of Gal(beta1-3)GalNAc. Forms intermolecular disulfide bonds either with other MAGP-1 molecules or with other components of the microfibrils. Post-translationally, forms transglutaminase cross-links with tropoelastin.

The protein localises to the secreted. Its subcellular location is the extracellular space. It is found in the extracellular matrix. In terms of biological role, component of the elastin-associated microfibrils. This chain is Microfibrillar-associated protein 2 (MFAP2), found in Bos taurus (Bovine).